A 493-amino-acid chain; its full sequence is Non-cyanogenic beta-glucosidase (493 aa).

The N-terminal stretch at 1-18 (MDFIVAIFALFVISSFTI) is a signal peptide. Asn-34 carries an N-linked (GlcNAc...) asparagine glycan. Residues Gln-54, His-158, and 203 to 204 (NE) contribute to the a beta-D-glucoside site. Glu-204 functions as the Proton donor in the catalytic mechanism. The N-linked (GlcNAc...) asparagine glycan is linked to Asn-335. Tyr-346 is an a beta-D-glucoside binding site. Asn-371 and Asn-412 each carry an N-linked (GlcNAc...) asparagine glycan. Residues Glu-422, Trp-471, 478 to 479 (EW), and Phe-487 each bind a beta-D-glucoside. The Nucleophile role is filled by Glu-422.

It belongs to the glycosyl hydrolase 1 family. In terms of tissue distribution, leaves.

The catalysed reaction is Hydrolysis of terminal, non-reducing beta-D-glucosyl residues with release of beta-D-glucose.. The polypeptide is Non-cyanogenic beta-glucosidase (Trifolium repens (Creeping white clover)).